Reading from the N-terminus, the 423-residue chain is Probable sucrose-phosphatase 1 (423 aa).

The protein belongs to the sucrose phosphatase family. As to quaternary structure, homodimer. Mg(2+) is required as a cofactor.

The enzyme catalyses sucrose 6(F)-phosphate + H2O = sucrose + phosphate. The protein operates within glycan biosynthesis; sucrose biosynthesis; sucrose from D-fructose 6-phosphate and UDP-alpha-D-glucose: step 2/2. Its function is as follows. Catalyzes the final step of sucrose synthesis. This is Probable sucrose-phosphatase 1 (SPP1) from Arabidopsis thaliana (Mouse-ear cress).